Reading from the N-terminus, the 106-residue chain is Small ribosomal subunit protein uS10 (106 aa).

It belongs to the universal ribosomal protein uS10 family. As to quaternary structure, part of the 30S ribosomal subunit.

In terms of biological role, involved in the binding of tRNA to the ribosomes. This Mycoplasma genitalium (strain ATCC 33530 / DSM 19775 / NCTC 10195 / G37) (Mycoplasmoides genitalium) protein is Small ribosomal subunit protein uS10.